The primary structure comprises 451 residues: Eukaryotic translation initiation factor 3 subunit E (451 aa).

One can recognise a PCI domain in the interval 256-425 (TDLFFSPAYI…GTVIMNHPPQ (170 aa)).

The protein belongs to the eIF-3 subunit E family. Component of the eukaryotic translation initiation factor 3 (eIF-3) complex.

It is found in the cytoplasm. Its function is as follows. Component of the eukaryotic translation initiation factor 3 (eIF-3) complex, which is involved in protein synthesis of a specialized repertoire of mRNAs and, together with other initiation factors, stimulates binding of mRNA and methionyl-tRNAi to the 40S ribosome. The eIF-3 complex specifically targets and initiates translation of a subset of mRNAs involved in cell proliferation. The protein is Eukaryotic translation initiation factor 3 subunit E (int6) of Aspergillus oryzae (strain ATCC 42149 / RIB 40) (Yellow koji mold).